The following is a 117-amino-acid chain: Hydrogenase maturation factor HypA (117 aa).

Histidine 2 contributes to the Ni(2+) binding site. The Zn(2+) site is built by cysteine 73, cysteine 76, cysteine 89, and cysteine 92.

Belongs to the HypA/HybF family.

In terms of biological role, involved in the maturation of [NiFe] hydrogenases. Required for nickel insertion into the metal center of the hydrogenase. The sequence is that of Hydrogenase maturation factor HypA from Shewanella baltica (strain OS223).